Reading from the N-terminus, the 400-residue chain is Polyadenylate-binding protein-interacting protein 1 (400 aa).

Residues Met1–Glu10 show a composition bias toward basic and acidic residues. The interval Met1–Lys36 is disordered. Residues Thr12–Ser32 show a composition bias toward polar residues. The PABPC1-interacting motif-2 (PAM2) stretch occupies residues Pro37–Asn64. A PAIP1 middle domain (PAIP1M) region spans residues Thr78–Ser296. An MIF4G domain is found at Ser80–Asn297. The disordered stretch occupies residues Asp356–Asp376. The segment at Gly361 to Gln400 is PABPC1-interacting motif-1 (PAM1).

As to quaternary structure, interacts with the RRM1-RRM2 and C-terminus regions of PABPC1 in a 1:1 stoichiometry. Interacts with EIF4A.

The protein localises to the cytoplasm. Acts as a coactivator in the regulation of translation initiation of poly(A)-containing mRNAs. Its stimulatory activity on translation is mediated via its action on PABPC1. Competes with PAIP2 for binding to PABPC1. Its association with EIF4A and PABPC1 may potentiate contacts between mRNA termini. May also be involved in translationally coupled mRNA turnover. Implicated with other RNA-binding proteins in the cytoplasmic deadenylation/translational and decay interplay of the FOS mRNA mediated by the major coding-region determinant of instability (mCRD) domain. The polypeptide is Polyadenylate-binding protein-interacting protein 1 (Paip1) (Mus musculus (Mouse)).